A 447-amino-acid chain; its full sequence is Glutamate--tRNA ligase 2 (447 aa).

Residues 8–18 (PSPTGYLHVGN) carry the 'HIGH' region motif. The 'KMSKS' region signature appears at 239–243 (KLSKR). ATP is bound at residue lysine 242.

The protein belongs to the class-I aminoacyl-tRNA synthetase family. Glutamate--tRNA ligase type 1 subfamily. In terms of assembly, monomer.

It is found in the cytoplasm. It carries out the reaction tRNA(Glu) + L-glutamate + ATP = L-glutamyl-tRNA(Glu) + AMP + diphosphate. Its function is as follows. Catalyzes the attachment of glutamate to tRNA(Glu) in a two-step reaction: glutamate is first activated by ATP to form Glu-AMP and then transferred to the acceptor end of tRNA(Glu). This chain is Glutamate--tRNA ligase 2, found in Granulibacter bethesdensis (strain ATCC BAA-1260 / CGDNIH1).